Consider the following 66-residue polypeptide: Large ribosomal subunit protein bL33c (66 aa).

It belongs to the bacterial ribosomal protein bL33 family.

The protein localises to the plastid. It localises to the chloroplast. The chain is Large ribosomal subunit protein bL33c from Agrostis stolonifera (Creeping bentgrass).